The following is a 1004-amino-acid chain: 2-oxoglutarate dehydrogenase E1 component (1004 aa).

This sequence belongs to the alpha-ketoglutarate dehydrogenase family. As to quaternary structure, homodimer. Part of the 2-oxoglutarate dehydrogenase (OGDH) complex composed of E1 (2-oxoglutarate dehydrogenase), E2 (dihydrolipoamide succinyltransferase) and E3 (dihydrolipoamide dehydrogenase); the complex contains multiple copies of the three enzymatic components (E1, E2 and E3). Thiamine diphosphate serves as cofactor.

It carries out the reaction N(6)-[(R)-lipoyl]-L-lysyl-[protein] + 2-oxoglutarate + H(+) = N(6)-[(R)-S(8)-succinyldihydrolipoyl]-L-lysyl-[protein] + CO2. Its function is as follows. E1 component of the 2-oxoglutarate dehydrogenase (OGDH) complex which catalyzes the decarboxylation of 2-oxoglutarate, the first step in the conversion of 2-oxoglutarate to succinyl-CoA and CO(2). The chain is 2-oxoglutarate dehydrogenase E1 component from Brucella melitensis biotype 2 (strain ATCC 23457).